We begin with the raw amino-acid sequence, 237 residues long: Ribonuclease PH (237 aa).

Phosphate-binding positions include Arg-86 and 124-126 (GTR).

This sequence belongs to the RNase PH family. Homohexameric ring arranged as a trimer of dimers.

It carries out the reaction tRNA(n+1) + phosphate = tRNA(n) + a ribonucleoside 5'-diphosphate. Phosphorolytic 3'-5' exoribonuclease that plays an important role in tRNA 3'-end maturation. Removes nucleotide residues following the 3'-CCA terminus of tRNAs; can also add nucleotides to the ends of RNA molecules by using nucleoside diphosphates as substrates, but this may not be physiologically important. Probably plays a role in initiation of 16S rRNA degradation (leading to ribosome degradation) during starvation. This is Ribonuclease PH from Erythrobacter litoralis (strain HTCC2594).